Here is a 345-residue protein sequence, read N- to C-terminus: 3'-5' exoribonuclease 1 (345 aa).

Composition is skewed to basic and acidic residues over residues 1-11 (MEDERGRERGG) and 19-46 (PRPE…ETDG). The disordered stretch occupies residues 1–50 (MEDERGRERGGDAAQQKTPRPECEESRPLSVEKKQRCRLDGKETDGSKFI). Ser55 and Ser58 each carry phosphoserine. Positions 72 to 106 (INRMSKEELRAKLSEFKLETRGVKDVLKKRLKNYY) constitute an SAP domain. Residues 126–302 (ICIIDFEATC…DDSKNIARIA (177 aa)) form the Exonuclease domain. The Mg(2+) site is built by Asp130 and Glu132. Residue Glu132 is the Proton acceptor of the active site. AMP is bound by residues Glu132 and Ala133. Asp230 serves as a coordination point for Mg(2+). His289 serves as the catalytic Proton acceptor. Residue His289 participates in AMP binding. Residue Asp294 coordinates Mg(2+).

Identified in a histone pre-mRNA complex, at least composed of ERI1, LSM11, SLBP, SNRPB, SYNCRIP and YBX1. Binds to 40S and 60S ribosomal subunits and to 80S assembled ribosomes. Interacts in a cooperative manner with SLBP to the mature 3'-end of histone mRNAs. Found in a ternary complex with SLBP and the stem-loop structure of the 3'-end of histone mRNAs. The cofactor is Mg(2+). Widely expressed with high levels in spleen, thymus and testis (at protein level).

The protein resides in the cytoplasm. Its subcellular location is the nucleus. It is found in the nucleolus. It catalyses the reaction Exonucleolytic cleavage in the 3'- to 5'-direction to yield nucleoside 5'-phosphates.. Although it can bind simultaneously with SLBP to the 3'-end of histone mRNA, the presence of SLBP prevents the exonuclease activity. Its function is as follows. RNA exonuclease that binds to the 3'-end of histone mRNAs and degrades them, suggesting that it plays an essential role in histone mRNA decay after replication. A 2' and 3'-hydroxyl groups at the last nucleotide of the histone 3'-end is required for efficient 3'-end histone mRNA exonuclease activity and degradation of RNA substrates. Also able to degrade the 3'-overhangs of short interfering RNAs (siRNAs) in vitro, suggesting a possible role as regulator of RNA interference (RNAi). Required for binding the 5'-ACCCA-3' sequence present in stem-loop structure. Able to bind other mRNAs. Required for 5.8S rRNA 3'-end processing. Also binds to 5.8s ribosomal RNA. Binds with high affinity to the stem-loop structure of replication-dependent histone pre-mRNAs. In vitro, does not have sequence specificity. In vitro, has weak DNA exonuclease activity. In vitro, shows biphasic kinetics such that there is rapid hydrolysis of the last three unpaired RNA nucleotides in the 39 flanking sequence followed by a much slower cleavage through the stem that occurs over a longer incubation period in the order of hours. ERI1-mediated RNA metabolism plays a key role in chondrogenesis. The protein is 3'-5' exoribonuclease 1 (Eri1) of Mus musculus (Mouse).